Consider the following 216-residue polypeptide: Orotate phosphoribosyltransferase (216 aa).

Lys-30 is a binding site for 5-phospho-alpha-D-ribose 1-diphosphate. 38–39 provides a ligand contact to orotate; the sequence is FF. 5-phospho-alpha-D-ribose 1-diphosphate is bound by residues 75–76, Arg-102, Lys-103, Lys-106, His-108, and 128–136; these read YK and DDVITAGTA. Positions 132 and 160 each coordinate orotate.

This sequence belongs to the purine/pyrimidine phosphoribosyltransferase family. PyrE subfamily. Homodimer. It depends on Mg(2+) as a cofactor.

It catalyses the reaction orotidine 5'-phosphate + diphosphate = orotate + 5-phospho-alpha-D-ribose 1-diphosphate. It functions in the pathway pyrimidine metabolism; UMP biosynthesis via de novo pathway; UMP from orotate: step 1/2. In terms of biological role, catalyzes the transfer of a ribosyl phosphate group from 5-phosphoribose 1-diphosphate to orotate, leading to the formation of orotidine monophosphate (OMP). This Acinetobacter baylyi (strain ATCC 33305 / BD413 / ADP1) protein is Orotate phosphoribosyltransferase.